A 220-amino-acid polypeptide reads, in one-letter code: Ribosomal RNA small subunit methyltransferase G (220 aa).

Residues G78, L83, and R144 each contribute to the S-adenosyl-L-methionine site.

The protein belongs to the methyltransferase superfamily. RNA methyltransferase RsmG family.

It localises to the cytoplasm. It catalyses the reaction guanosine(527) in 16S rRNA + S-adenosyl-L-methionine = N(7)-methylguanosine(527) in 16S rRNA + S-adenosyl-L-homocysteine. Specifically methylates the N7 position of guanine in position 527 of 16S rRNA. The polypeptide is Ribosomal RNA small subunit methyltransferase G (Alkalilimnicola ehrlichii (strain ATCC BAA-1101 / DSM 17681 / MLHE-1)).